The chain runs to 316 residues: Epiphycan (316 aa).

The signal sequence occupies residues 1 to 23; that stretch reads MKTFVNIFLGFFIFESVGAVPIT. Residue S98 is glycosylated (O-linked (Xyl...) (dermatan sulfate) serine). The region spanning 100–137 is the LRRNT domain; the sequence is VLVPQTQDGLPTCLLCTCLGTTVYCDDRELDAVPPLPK. The cysteines at positions 112 and 124 are disulfide-linked. 6 LRR repeats span residues 138-159, 162-183, 186-207, 232-252, 253-274, and 284-304; these read NTMYFYSRYNRIRKINKNDFAN, NLKRIDLTANLISEIHEDAFRR, QLLELVLRDNRIRQLPELPSTL, ELQHLYITDNNLDHVPLPLPE, SLQALHLQNNNIQEMHEDTFCK, and ALEDIRLDGNPINLSKTPYAY. A disulfide bond links C273 and C306. N296 is a glycosylation site (N-linked (GlcNAc...) asparagine).

Belongs to the small leucine-rich proteoglycan (SLRP) family. SLRP class III subfamily. Post-translationally, the O-linked glycosaminoglycan chain(s) are dermatan sulfate. Preferentially expressed in flattened chondrocytes of developing chick limb cartilage. Also found in the cartilage peripheral zone bordering with bone marrow cavity.

The protein localises to the secreted. Its subcellular location is the extracellular space. It localises to the extracellular matrix. Functionally, may have a role in bone formation and also in establishing the ordered structure of cartilage through matrix organization. This Gallus gallus (Chicken) protein is Epiphycan (EPYC).